Reading from the N-terminus, the 272-residue chain is Undecaprenyl-diphosphatase (272 aa).

7 helical membrane-spanning segments follow: residues 6–26 (SLLI…LPVS), 45–65 (AKTF…VMFW), 92–112 (THIL…HDVI), 115–135 (LFYP…LLAA), 189–209 (YAAS…ATVL), 221–241 (ADVP…LIAI), and 251–271 (ISFI…YMVF).

This sequence belongs to the UppP family.

Its subcellular location is the cell inner membrane. It carries out the reaction di-trans,octa-cis-undecaprenyl diphosphate + H2O = di-trans,octa-cis-undecaprenyl phosphate + phosphate + H(+). Its function is as follows. Catalyzes the dephosphorylation of undecaprenyl diphosphate (UPP). Confers resistance to bacitracin. This chain is Undecaprenyl-diphosphatase, found in Pectobacterium atrosepticum (strain SCRI 1043 / ATCC BAA-672) (Erwinia carotovora subsp. atroseptica).